The sequence spans 302 residues: MKLLILTCLVALGFARPMVEKISESEEYVNEVPEKRLKRRFPVKNEHQVEINHHLRPESEMMSLYYQPFYWSEEMRNLKMTSLPKDRRMAVLKSTVSDEVFPSLQHKSLSLPKSKVQPLSRQQILTFHTLQMVPLSHKLLTTPKREMLPIYERERLPAHKRESLLAHERESLLAHERDILVPQREMSFVPEREFLFASERVVLPEQEKEILHNDEREVLAVHKKEILPPFEKEKVLPLLQHRVVPLPQREIVPPFQRETLLPEEILPVNQWELMPEVVPFDPYPFLQPVAPFYYSTELNEKN.

An N-terminal signal peptide occupies residues 1-15 (MKLLILTCLVALGFA). Phosphoserine is present on residues Ser23 and Ser25. Tandem repeats lie at residues 144 to 151 (KREMLPIY), 152 to 159 (ERERLPAH), 160 to 167 (KRESLLAH), 168 to 175 (ERESLLAH), 176 to 182 (ERDILVP), 183 to 190 (QREMSFVP), 191 to 198 (EREFLFAS), 199 to 204 (ERVVLP), 205 to 214 (EQEKEILHND), 215 to 222 (EREVLAVH), 223 to 230 (KKEILPPF), 231 to 238 (EKEKVLPL), 241 to 247 (HRVVPLP), 248 to 255 (QREIVPPF), 256 to 262 (QRETLLP), and 263 to 269 (EEILPVN). The interval 144 to 269 (KREMLPIYER…LLPEEILPVN (126 aa)) is 16 X approximate tandem repeats.

This sequence belongs to the beta-casein family. In terms of tissue distribution, mammary gland specific. Secreted in milk.

It localises to the secreted. Functionally, important role in determination of the surface properties of the casein micelles. This Notamacropus eugenii (Tammar wallaby) protein is Beta-casein (CSN2).